A 112-amino-acid polypeptide reads, in one-letter code: Large ribosomal subunit protein eL33w (112 aa).

Belongs to the eukaryotic ribosomal protein eL33 family.

This Arabidopsis thaliana (Mouse-ear cress) protein is Large ribosomal subunit protein eL33w (RPL35AA).